The primary structure comprises 456 residues: Gamma-aminobutyric acid receptor subunit alpha-1 (456 aa).

The signal sequence occupies residues 1–27; it reads MRKSPGLSDCLWAWILLLSTLTGRSYG. At 28 to 253 the chain is on the extracellular side; sequence QPSLQDELKD…FHLKRKIGYF (226 aa). The N-linked (GlcNAc...) asparagine glycan is linked to Asn38. Arg94 contacts 4-aminobutanoate. Asn138 is a glycosylation site (N-linked (GlcNAc...) asparagine). Thr157 contributes to the 4-aminobutanoate binding site. Cys166 and Cys180 are joined by a disulfide. Residues 254 to 274 traverse the membrane as a helical segment; it reads VIQTYLPCIMTVILSQVSFWL. At 275 to 279 the chain is on the cytoplasmic side; that stretch reads NRESV. Residues 280–301 traverse the membrane as a helical segment; that stretch reads PARTVFGVTTVLTMTTLSISAR. Over 302 to 311 the chain is Extracellular; that stretch reads NSLPKVAYAT. A helical transmembrane segment spans residues 312 to 333; it reads AMDWFIAVCYAFVFSALIEFAT. Over 334–421 the chain is Cytoplasmic; that stretch reads VNYFTKRGYA…TFNSVSKIDR (88 aa). The helical transmembrane segment at 422-441 threads the bilayer; the sequence is LSRIAFPLLFGIFNLIYWAT. Over 442–456 the chain is Extracellular; the sequence is YLNREPQLKAPTPHQ.

This sequence belongs to the ligand-gated ion channel (TC 1.A.9) family. Gamma-aminobutyric acid receptor (TC 1.A.9.5) subfamily. GABRA1 sub-subfamily. As to quaternary structure, heteropentamer, formed by a combination of alpha (GABRA1-6), beta (GABRB1-3), gamma (GABRG1-3), delta (GABRD), epsilon (GABRE), rho (GABRR1-3), pi (GABRP) and theta (GABRQ) subunits, each subunit exhibiting distinct physiological and pharmacological properties. Interacts with UBQLN1. Interacts with TRAK1. Interacts with KIF21B. Identified in a complex of 720 kDa composed of LHFPL4, NLGN2, GABRA1, GABRB2, GABRG2 and GABRB3. Interacts with LHFPL4. Interacts with NLGN2. Interacts with SHISA7; interaction leads to the regulation of GABA(A) receptor trafficking, channel deactivation kinetics and pharmacology.

It is found in the postsynaptic cell membrane. Its subcellular location is the cell membrane. The protein localises to the cytoplasmic vesicle membrane. It catalyses the reaction chloride(in) = chloride(out). Allosterically activated by benzodiazepines, the neuroanesthetic alphaxalone and pentobarbital. Inhibited by the antagonist bicuculline. Potentiated by histamine. In terms of biological role, alpha subunit of the heteropentameric ligand-gated chloride channel gated by gamma-aminobutyric acid (GABA), a major inhibitory neurotransmitter in the brain. GABA-gated chloride channels, also named GABA(A) receptors (GABAAR), consist of five subunits arranged around a central pore and contain GABA active binding site(s) located at the alpha and beta subunit interface(s). When activated by GABA, GABAARs selectively allow the flow of chloride anions across the cell membrane down their electrochemical gradient. Alpha-1/GABRA1-containing GABAARs are largely synaptic. Chloride influx into the postsynaptic neuron following GABAAR opening decreases the neuron ability to generate a new action potential, thereby reducing nerve transmission. GABAARs containing alpha-1 and beta-2 or -3 subunits exhibit synaptogenic activity; the gamma-2 subunit being necessary but not sufficient to induce rapid synaptic contacts formation. GABAARs function also as histamine receptor where histamine binds at the interface of two neighboring beta subunits and potentiates GABA response. GABAARs containing alpha, beta and epsilon subunits also permit spontaneous chloride channel activity while preserving the structural information required for GABA-gated openings. Alpha-1-mediated plasticity in the orbitofrontal cortex regulates context-dependent action selection. Together with rho subunits, may also control neuronal and glial GABAergic transmission in the cerebellum. The protein is Gamma-aminobutyric acid receptor subunit alpha-1 (GABRA1) of Pongo abelii (Sumatran orangutan).